Here is a 376-residue protein sequence, read N- to C-terminus: MSKRFMITAGGTGGHIFPAQGLAQELIKKTYSSSILFVAGGLSTNKYFDRSIFPFQEVSASPLFSKNPFKLLKGVFNLLRGVWQSIRIIRKFKPDVVVGFGSYYTVPPLLAAKILRIPIVLHEANSIPGKANKWLASMAWRVGIHFPFTATLLKGNTIEVGMPLREGYQLDQIDKIEALSYFGLSKNNSTLLVFGGSQGALAINRLMRNLANTWKNTPIQIIHITGSIQEADELKIFYANYQVKASVKAFEKNMHLAWRAAEVFISRSGASTIAEAMEFEVPGILIPYPHATDHHQDKNADFFVDIVKGGIKIVEEKAKPEIVLKSIQLLIDPIALDKRKSAIHSYKCRPDRTTLCELVLDTSELKSLHKAPQKRK.

UDP-N-acetyl-alpha-D-glucosamine-binding positions include 12–14 (TGG), Asn125, Arg165, Ser197, and Gln296.

Belongs to the glycosyltransferase 28 family. MurG subfamily.

The protein resides in the cell inner membrane. It carries out the reaction di-trans,octa-cis-undecaprenyl diphospho-N-acetyl-alpha-D-muramoyl-L-alanyl-D-glutamyl-meso-2,6-diaminopimeloyl-D-alanyl-D-alanine + UDP-N-acetyl-alpha-D-glucosamine = di-trans,octa-cis-undecaprenyl diphospho-[N-acetyl-alpha-D-glucosaminyl-(1-&gt;4)]-N-acetyl-alpha-D-muramoyl-L-alanyl-D-glutamyl-meso-2,6-diaminopimeloyl-D-alanyl-D-alanine + UDP + H(+). It functions in the pathway cell wall biogenesis; peptidoglycan biosynthesis. Cell wall formation. Catalyzes the transfer of a GlcNAc subunit on undecaprenyl-pyrophosphoryl-MurNAc-pentapeptide (lipid intermediate I) to form undecaprenyl-pyrophosphoryl-MurNAc-(pentapeptide)GlcNAc (lipid intermediate II). This chain is UDP-N-acetylglucosamine--N-acetylmuramyl-(pentapeptide) pyrophosphoryl-undecaprenol N-acetylglucosamine transferase, found in Protochlamydia amoebophila (strain UWE25).